The primary structure comprises 140 residues: Nucleoside diphosphate kinase (140 aa).

The ATP site is built by Lys-11, Phe-59, Arg-87, Thr-93, Arg-104, and Asn-114. His-117 (pros-phosphohistidine intermediate) is an active-site residue.

This sequence belongs to the NDK family. In terms of assembly, homotetramer. Mg(2+) serves as cofactor.

It localises to the cytoplasm. It catalyses the reaction a 2'-deoxyribonucleoside 5'-diphosphate + ATP = a 2'-deoxyribonucleoside 5'-triphosphate + ADP. The catalysed reaction is a ribonucleoside 5'-diphosphate + ATP = a ribonucleoside 5'-triphosphate + ADP. In terms of biological role, major role in the synthesis of nucleoside triphosphates other than ATP. The ATP gamma phosphate is transferred to the NDP beta phosphate via a ping-pong mechanism, using a phosphorylated active-site intermediate. The chain is Nucleoside diphosphate kinase from Rhodopseudomonas palustris (strain BisB5).